The chain runs to 213 residues: FMN-dependent NADH:quinone oxidoreductase 1 (213 aa).

18–20 (SVS) contacts FMN.

The protein belongs to the azoreductase type 1 family. Homodimer. Requires FMN as cofactor.

The enzyme catalyses 2 a quinone + NADH + H(+) = 2 a 1,4-benzosemiquinone + NAD(+). It carries out the reaction N,N-dimethyl-1,4-phenylenediamine + anthranilate + 2 NAD(+) = 2-(4-dimethylaminophenyl)diazenylbenzoate + 2 NADH + 2 H(+). Functionally, quinone reductase that provides resistance to thiol-specific stress caused by electrophilic quinones. In terms of biological role, also exhibits azoreductase activity. Catalyzes the reductive cleavage of the azo bond in aromatic azo compounds to the corresponding amines. The polypeptide is FMN-dependent NADH:quinone oxidoreductase 1 (Bacillus cereus (strain ZK / E33L)).